A 305-amino-acid polypeptide reads, in one-letter code: Olfactory receptor 4X1 (305 aa).

At 1–23 (MVATNNVTEIIFVGFSQNWSEQR) the chain is on the extracellular side. Asn-6 and Asn-18 each carry an N-linked (GlcNAc...) asparagine glycan. A helical membrane pass occupies residues 24–47 (VISVMFLLMYTAVVLGNGLIVVTI). Over 48 to 55 (LASKVLTS) the chain is Cytoplasmic. A helical transmembrane segment spans residues 56-77 (PMYFFLSYLSFVEICYCSVMAP). The Extracellular segment spans residues 78 to 98 (KLIFDSFIKRKVISLKGCLTQ). Cys-95 and Cys-187 are disulfide-bonded. The chain crosses the membrane as a helical span at residues 99–118 (MFSLHFFGGTEAFLLMVMAY). The Cytoplasmic portion of the chain corresponds to 119-137 (DRYVAICKPLHYMAIMNQR). A helical transmembrane segment spans residues 138–156 (MCGLLVRIAWGGGLLHSVG). The Extracellular segment spans residues 157 to 193 (QTFLIFQLPFCGPNIMDHYFCDVHPVLELACADTFFI). The chain crosses the membrane as a helical span at residues 194-217 (SLLIITNGGSISVVSFFVLMASYL). Residues 218 to 233 (IILHFLRSHNLEGQHK) lie on the Cytoplasmic side of the membrane. A helical membrane pass occupies residues 234-256 (ALSTCASHVTVVDLFFIPCSLVY). Over 257 to 267 (IRPCVTLPADK) the chain is Extracellular. Residues 268 to 287 (IVAVFYTVVTPLLNPVIYSF) traverse the membrane as a helical segment. The Cytoplasmic portion of the chain corresponds to 288–305 (RNAEVKNAMRRFIGGKVI).

The protein belongs to the G-protein coupled receptor 1 family.

Its subcellular location is the cell membrane. Odorant receptor. The protein is Olfactory receptor 4X1 (OR4X1) of Homo sapiens (Human).